We begin with the raw amino-acid sequence, 235 residues long: Carboxy-S-adenosyl-L-methionine synthase (235 aa).

S-adenosyl-L-methionine is bound by residues tyrosine 35, 60-62, 83-84, asparagine 124, and arginine 191; these read GCS and DN.

It belongs to the class I-like SAM-binding methyltransferase superfamily. Cx-SAM synthase family. In terms of assembly, homodimer.

The catalysed reaction is prephenate + S-adenosyl-L-methionine = carboxy-S-adenosyl-L-methionine + 3-phenylpyruvate + H2O. Catalyzes the conversion of S-adenosyl-L-methionine (SAM) to carboxy-S-adenosyl-L-methionine (Cx-SAM). The polypeptide is Carboxy-S-adenosyl-L-methionine synthase (Campylobacter jejuni subsp. jejuni serotype O:23/36 (strain 81-176)).